Consider the following 616-residue polypeptide: ATP-dependent zinc metalloprotease FtsH (616 aa).

The Cytoplasmic portion of the chain corresponds to 1–8; that stretch reads MRNLFKTA. Residues 9-29 traverse the membrane as a helical segment; that stretch reads TIYILIALVILLLVDIFSGGL. Over 30–114 the chain is Extracellular; the sequence is SYNQFFSNLS…VTKEPPQVPW (85 aa). The helical transmembrane segment at 115 to 135 threads the bilayer; sequence WLSTFLPMLIFAGLMIFVWIF. Topologically, residues 136 to 616 are cytoplasmic; sequence MLQQTQGGGS…VFEDAQPQLV (481 aa). Residue 208 to 215 coordinates ATP; that stretch reads GPPGTGKT. His-430 provides a ligand contact to Zn(2+). Glu-431 is an active-site residue. Residues His-434 and Asp-506 each contribute to the Zn(2+) site.

The protein in the central section; belongs to the AAA ATPase family. This sequence in the C-terminal section; belongs to the peptidase M41 family. Homohexamer. The cofactor is Zn(2+).

It localises to the cell membrane. Functionally, acts as a processive, ATP-dependent zinc metallopeptidase for both cytoplasmic and membrane proteins. Plays a role in the quality control of integral membrane proteins. The polypeptide is ATP-dependent zinc metalloprotease FtsH (Caldicellulosiruptor bescii (strain ATCC BAA-1888 / DSM 6725 / KCTC 15123 / Z-1320) (Anaerocellum thermophilum)).